The following is a 193-amino-acid chain: Selenate reductase assembly chaperone protein (193 aa).

The protein belongs to the type II DMSO reductase enzyme chaperone family.

The protein resides in the cytoplasm. Functionally, may function as a system-specific chaperone protein essential for the assembly of an active selenate reductase SerABC. This is Selenate reductase assembly chaperone protein from Thauera selenatis.